Here is a 474-residue protein sequence, read N- to C-terminus: Ribulose bisphosphate carboxylase large chain (474 aa).

The substrate site is built by N122 and T172. The Proton acceptor role is filled by K174. K176 provides a ligand contact to substrate. Mg(2+)-binding residues include K200, D202, and E203. An N6-carboxylysine modification is found at K200. H293 serves as the catalytic Proton acceptor. Substrate contacts are provided by R294, H326, and S378.

This sequence belongs to the RuBisCO large chain family. Type I subfamily. In terms of assembly, heterohexadecamer of 8 large chains and 8 small chains; disulfide-linked. The disulfide link is formed within the large subunit homodimers. The cofactor is Mg(2+). The disulfide bond which can form in the large chain dimeric partners within the hexadecamer appears to be associated with oxidative stress and protein turnover.

The protein resides in the carboxysome. It carries out the reaction 2 (2R)-3-phosphoglycerate + 2 H(+) = D-ribulose 1,5-bisphosphate + CO2 + H2O. The catalysed reaction is D-ribulose 1,5-bisphosphate + O2 = 2-phosphoglycolate + (2R)-3-phosphoglycerate + 2 H(+). Its function is as follows. RuBisCO catalyzes two reactions: the carboxylation of D-ribulose 1,5-bisphosphate, the primary event in carbon dioxide fixation, as well as the oxidative fragmentation of the pentose substrate in the photorespiration process. Both reactions occur simultaneously and in competition at the same active site. This Synechococcus sp. (strain JA-2-3B'a(2-13)) (Cyanobacteria bacterium Yellowstone B-Prime) protein is Ribulose bisphosphate carboxylase large chain.